A 122-amino-acid chain; its full sequence is Protein GL2-INTERACTING REPRESSOR 1 (122 aa).

The span at 1-10 shows a compositional bias: basic and acidic residues; sequence MSRRSPKLEL. A disordered region spans residues 1–62; sequence MSRRSPKLEL…PSVRYSTSPE (62 aa). The EAR motif lies at 7–12; sequence KLELKL. Over residues 27–46 the composition is skewed to low complexity; it reads SPSRSATTSPTSPPSSCVSS. Residues 47 to 62 are compositionally biased toward polar residues; it reads EMNQDEPSVRYSTSPE.

In terms of assembly, interacts with GL2. Interacts with TPL. In terms of tissue distribution, expressed in root and shoot meristems.

Its subcellular location is the nucleus. Its function is as follows. Acts as a negative regulator of root hair development redundantly with GIR2. GIR1 and GIR2 may function as adapter proteins that associate with GL2 and participate in the control of root hair formation. GIR1 and GIR2 may function as adapter proteins that associate with TPL and participate in the repression of root gene expression. This chain is Protein GL2-INTERACTING REPRESSOR 1, found in Arabidopsis thaliana (Mouse-ear cress).